A 395-amino-acid polypeptide reads, in one-letter code: Chorismate synthase (395 aa).

2 residues coordinate NADP(+): Arg40 and Arg46. FMN-binding positions include 137-139 (RSS), Gly308, 323-327 (KPLPT), and Arg349.

This sequence belongs to the chorismate synthase family. Homotetramer. Requires FMNH2 as cofactor.

It carries out the reaction 5-O-(1-carboxyvinyl)-3-phosphoshikimate = chorismate + phosphate. The protein operates within metabolic intermediate biosynthesis; chorismate biosynthesis; chorismate from D-erythrose 4-phosphate and phosphoenolpyruvate: step 7/7. Functionally, catalyzes the anti-1,4-elimination of the C-3 phosphate and the C-6 proR hydrogen from 5-enolpyruvylshikimate-3-phosphate (EPSP) to yield chorismate, which is the branch point compound that serves as the starting substrate for the three terminal pathways of aromatic amino acid biosynthesis. This reaction introduces a second double bond into the aromatic ring system. In Gloeobacter violaceus (strain ATCC 29082 / PCC 7421), this protein is Chorismate synthase.